A 208-amino-acid polypeptide reads, in one-letter code: GTP cyclohydrolase 1 (208 aa).

3 residues coordinate Zn(2+): cysteine 98, histidine 101, and cysteine 169.

This sequence belongs to the GTP cyclohydrolase I family. In terms of assembly, toroid-shaped homodecamer, composed of two pentamers of five dimers.

It carries out the reaction GTP + H2O = 7,8-dihydroneopterin 3'-triphosphate + formate + H(+). The protein operates within cofactor biosynthesis; 7,8-dihydroneopterin triphosphate biosynthesis; 7,8-dihydroneopterin triphosphate from GTP: step 1/1. In Agrobacterium fabrum (strain C58 / ATCC 33970) (Agrobacterium tumefaciens (strain C58)), this protein is GTP cyclohydrolase 1.